A 1785-amino-acid polypeptide reads, in one-letter code: Brefeldin A-inhibited guanine nucleotide-exchange protein 2 (1785 aa).

Methionine 1 is modified (N-acetylmethionine). The tract at residues glutamine 2–alanine 224 is DCB; DCB:DCB domain and DCB:HUS domain interaction. Serine 214, serine 218, and serine 227 each carry phosphoserine. A disordered region spans residues arginine 232 to alanine 285. Threonine 244 carries the phosphothreonine modification. The segment covering threonine 244–serine 260 has biased composition (basic and acidic residues). 3 positions are modified to phosphoserine: serine 277, serine 348, and serine 349. The tract at residues alanine 508–asparagine 528 is HUS; DCB:HUS domain interaction. Serine 614 carries the post-translational modification Phosphoserine. A Phosphothreonine modification is found at threonine 616. Serine 617 carries the post-translational modification Phosphoserine. Threonine 626 carries the post-translational modification Phosphothreonine. In terms of domain architecture, SEC7 spans phenylalanine 654–serine 785. Phosphoserine occurs at positions 700, 1511, 1513, 1514, 1525, 1528, 1534, and 1782. Residues serine 1514–aspartate 1532 are compositionally biased toward polar residues. Residues serine 1514–tryptophan 1535 form a disordered region.

Homodimer. Interacts with ARFGEF1/BIG1; both proteins are probably part of the same or very similar macromolecular complexes. Interacts with PRKAR1A, PRKAR2A, PRKAR1B, PRKAR2B, PPP1CC, PDE3A, TNFRSF1A, MYCBP and EXOC7. Interacts with GABRB1, GABRB2 and GABRB3. Post-translationally, in vitro phosphorylated by PKA reducing its GEF activity and dephosphorylated by phosphatase PP1. Expressed in placenta, lung, heart, brain, kidney and pancreas.

It localises to the cytoplasm. It is found in the membrane. The protein localises to the golgi apparatus. The protein resides in the perinuclear region. Its subcellular location is the trans-Golgi network. It localises to the endosome. It is found in the cytoskeleton. The protein localises to the microtubule organizing center. The protein resides in the centrosome. Its subcellular location is the cell projection. It localises to the dendrite. It is found in the cytoplasmic vesicle. The protein localises to the synapse. Inhibited by brefeldin A. In terms of biological role, promotes guanine-nucleotide exchange on ARF1 and ARF3 and to a lower extent on ARF5 and ARF6. Promotes the activation of ARF1/ARF5/ARF6 through replacement of GDP with GTP. Involved in the regulation of Golgi vesicular transport. Required for the integrity of the endosomal compartment. Involved in trafficking from the trans-Golgi network (TGN) to endosomes and is required for membrane association of the AP-1 complex and GGA1. Seems to be involved in recycling of the transferrin receptor from recycling endosomes to the plasma membrane. Probably is involved in the exit of GABA(A) receptors from the endoplasmic reticulum. Involved in constitutive release of tumor necrosis factor receptor 1 via exosome-like vesicles; the function seems to involve PKA and specifically PRKAR2B. Proposed to act as A kinase-anchoring protein (AKAP) and may mediate crosstalk between Arf and PKA pathways. This Homo sapiens (Human) protein is Brefeldin A-inhibited guanine nucleotide-exchange protein 2 (ARFGEF2).